A 258-amino-acid polypeptide reads, in one-letter code: Acetylglutamate kinase (258 aa).

Residues 44–45 (GG), Arg-66, and Asn-158 each bind substrate. ATP-binding positions include 181–186 (DISSIL) and 209–211 (IIT).

Belongs to the acetylglutamate kinase family. ArgB subfamily. As to quaternary structure, homodimer.

Its subcellular location is the cytoplasm. The catalysed reaction is N-acetyl-L-glutamate + ATP = N-acetyl-L-glutamyl 5-phosphate + ADP. It participates in amino-acid biosynthesis; L-arginine biosynthesis; N(2)-acetyl-L-ornithine from L-glutamate: step 2/4. In terms of biological role, catalyzes the ATP-dependent phosphorylation of N-acetyl-L-glutamate. This chain is Acetylglutamate kinase, found in Buchnera aphidicola subsp. Schizaphis graminum (strain Sg).